The following is a 558-amino-acid chain: Membrane transporter D2 (558 aa).

The segment at 1–28 is disordered; the sequence is MTLKKRSSAPELPTSLDEDEEEDSPQPL. Residues 1–38 are Cytoplasmic-facing; sequence MTLKKRSSAPELPTSLDEDEEEDSPQPLSNTPFFSMKN. Residues 39 to 59 form a helical membrane-spanning segment; it reads LIVATPIILTPLLYGYNLGFV. Over 60 to 152 the chain is Extracellular; that stretch reads GPYSTMYGYA…QVGYSSIQSG (93 aa). Residues 153-173 traverse the membrane as a helical segment; that stretch reads VFAGSLVIGSTMGALMGGYLT. The Cytoplasmic segment spans residues 174–179; the sequence is KRLDYC. A helical membrane pass occupies residues 180 to 200; that stretch reads KSFLFIGLLSVIGNVLTHVAT. Over 201–204 the chain is Extracellular; that stretch reads GLFH. Residues 205-225 traverse the membrane as a helical segment; that stretch reads YWVLFVARIVLGFPLGWQSIT. Topologically, residues 226 to 241 are cytoplasmic; that stretch reads SSHYTDKFAPANHAKT. Residues 242–262 traverse the membrane as a helical segment; it reads LGTLFQVSVSTGIFVTSFFGL. Over 263–281 the chain is Extracellular; that stretch reads VLGNTIQYDAASNANTMGR. The helical transmembrane segment at 282 to 302 threads the bilayer; that stretch reads MQGLVSVSTLLSIFVVFLPLI. Over 303-335 the chain is Cytoplasmic; it reads TKDGYSKSRRGDYEGENSEDASRKAAEEYTMTQ. A helical membrane pass occupies residues 336–356; it reads MIGPILNGVAMGCVTQLTGIN. Over 357–373 the chain is Extracellular; sequence ANMNFAPTIMSNLGLQP. The helical transmembrane segment at 374–394 threads the bilayer; the sequence is LVGNIIVMAWNMLATFCVIPL. Topologically, residues 395–402 are cytoplasmic; the sequence is SRRFSMRT. A helical transmembrane segment spans residues 403-423; that stretch reads LFLFCGFVGSLCCVFLGGIPV. Topologically, residues 424–441 are extracellular; the sequence is YPGVTKSDKAISGIAITG. A helical membrane pass occupies residues 442-463; it reads IAIFIALYEMGVGPCFYVLAVD. The Cytoplasmic segment spans residues 464-478; sequence VFPESFRPIGSSITV. Residues 479–499 form a helical membrane-spanning segment; that stretch reads GVMFIFNLIINICYPIATEGI. The Extracellular segment spans residues 500-512; the sequence is SGGPSGNPNKGQA. Residues 513-533 form a helical membrane-spanning segment; it reads VAFIFFGCIGVVACVIEYFFL. Residues 534 to 558 lie on the Cytoplasmic side of the membrane; sequence QPWVEPEAKMTDDLDGAAVPEGKHD.

This sequence belongs to the major facilitator superfamily. Sugar transporter (TC 2.A.1.1) family.

The protein localises to the membrane. The chain is Membrane transporter D2 from Leishmania donovani.